Consider the following 181-residue polypeptide: Ferritin BfrB (181 aa).

In terms of domain architecture, Ferritin-like diiron spans 15-150 (MQEQIHNEFT…TLVRVADRAG (136 aa)). Positions 22, 55, 58, 99, and 132 each coordinate Fe cation.

It belongs to the ferritin family. Prokaryotic subfamily. In terms of assembly, homooligomer of 24 subunits that are packed together to form an approximately spherical molecule with a central cavity, in which large amounts of iron can be stored.

It catalyses the reaction 4 Fe(2+) + O2 + 4 H(+) = 4 Fe(3+) + 2 H2O. In terms of biological role, iron-storage protein that displays ferroxidase activity, catalyzing the oxidation of Fe(2+) ions into Fe(3+) ions, that can then be deposited as a ferric-oxide mineral core within the central cavity of the protein complex. The protein is Ferritin BfrB (bfrB) of Mycobacterium tuberculosis (strain ATCC 35801 / TMC 107 / Erdman).